The following is a 248-amino-acid chain: 3-deoxy-manno-octulosonate cytidylyltransferase (248 aa).

The protein belongs to the KdsB family.

It localises to the cytoplasm. It catalyses the reaction 3-deoxy-alpha-D-manno-oct-2-ulosonate + CTP = CMP-3-deoxy-beta-D-manno-octulosonate + diphosphate. It functions in the pathway nucleotide-sugar biosynthesis; CMP-3-deoxy-D-manno-octulosonate biosynthesis; CMP-3-deoxy-D-manno-octulosonate from 3-deoxy-D-manno-octulosonate and CTP: step 1/1. Its pathway is bacterial outer membrane biogenesis; lipopolysaccharide biosynthesis. Its function is as follows. Activates KDO (a required 8-carbon sugar) for incorporation into bacterial lipopolysaccharide in Gram-negative bacteria. In Cronobacter sakazakii (strain ATCC BAA-894) (Enterobacter sakazakii), this protein is 3-deoxy-manno-octulosonate cytidylyltransferase.